Reading from the N-terminus, the 81-residue chain is Photosystem I iron-sulfur center (81 aa).

2 consecutive 4Fe-4S ferredoxin-type domains span residues 2–31 and 39–68; these read SHSV…MIPW and IASA…VRVY. The [4Fe-4S] cluster site is built by C11, C14, C17, C21, C48, C51, C54, and C58.

In terms of assembly, the eukaryotic PSI reaction center is composed of at least 11 subunits. The cofactor is [4Fe-4S] cluster.

The protein localises to the plastid. The protein resides in the chloroplast thylakoid membrane. It carries out the reaction reduced [plastocyanin] + hnu + oxidized [2Fe-2S]-[ferredoxin] = oxidized [plastocyanin] + reduced [2Fe-2S]-[ferredoxin]. Apoprotein for the two 4Fe-4S centers FA and FB of photosystem I (PSI); essential for photochemical activity. FB is the terminal electron acceptor of PSI, donating electrons to ferredoxin. The C-terminus interacts with PsaA/B/D and helps assemble the protein into the PSI complex. Required for binding of PsaD and PsaE to PSI. PSI is a plastocyanin-ferredoxin oxidoreductase, converting photonic excitation into a charge separation, which transfers an electron from the donor P700 chlorophyll pair to the spectroscopically characterized acceptors A0, A1, FX, FA and FB in turn. The sequence is that of Photosystem I iron-sulfur center from Phaseolus vulgaris (Kidney bean).